Here is a 132-residue protein sequence, read N- to C-terminus: ATP synthase epsilon chain (132 aa).

The protein belongs to the ATPase epsilon chain family. F-type ATPases have 2 components, CF(1) - the catalytic core - and CF(0) - the membrane proton channel. CF(1) has five subunits: alpha(3), beta(3), gamma(1), delta(1), epsilon(1). CF(0) has three main subunits: a, b and c.

It is found in the cell inner membrane. Functionally, produces ATP from ADP in the presence of a proton gradient across the membrane. The protein is ATP synthase epsilon chain of Anaeromyxobacter sp. (strain Fw109-5).